Here is a 255-residue protein sequence, read N- to C-terminus: ATP synthase subunit a 2 (255 aa).

5 helical membrane passes run 26-46, 86-106, 131-151, 205-225, and 230-250; these read SINIDSMIMVWMVGLLFIGVF, LIGPLALTIFVWVFLMNSIDL, DVNVPVSMALGVFILIIGYTL, MIFILIALMPWWMQWALSVPW, and ILIVFLQAFIFMVLTIVYLAM.

This sequence belongs to the ATPase A chain family. As to quaternary structure, F-type ATPases have 2 components, CF(1) - the catalytic core - and CF(0) - the membrane proton channel. CF(1) has five subunits: alpha(3), beta(3), gamma(1), delta(1), epsilon(1). CF(0) has three main subunits: a(1), b(2) and c(9-12). The alpha and beta chains form an alternating ring which encloses part of the gamma chain. CF(1) is attached to CF(0) by a central stalk formed by the gamma and epsilon chains, while a peripheral stalk is formed by the delta and b chains.

Its subcellular location is the cell inner membrane. Its function is as follows. Key component of the proton channel; it plays a direct role in the translocation of protons across the membrane. This Photobacterium profundum (strain SS9) protein is ATP synthase subunit a 2.